We begin with the raw amino-acid sequence, 229 residues long: Uracil-DNA glycosylase (229 aa).

Catalysis depends on Asp-64, which acts as the Proton acceptor.

Belongs to the uracil-DNA glycosylase (UDG) superfamily. UNG family.

Its subcellular location is the cytoplasm. It carries out the reaction Hydrolyzes single-stranded DNA or mismatched double-stranded DNA and polynucleotides, releasing free uracil.. Its function is as follows. Excises uracil residues from the DNA which can arise as a result of misincorporation of dUMP residues by DNA polymerase or due to deamination of cytosine. The polypeptide is Uracil-DNA glycosylase (Escherichia coli O45:K1 (strain S88 / ExPEC)).